The sequence spans 447 residues: Argininosuccinate synthase (447 aa).

Residues 17–25 and Ala-43 contribute to the ATP site; that span reads AFSGGLDTS. Position 99 (Tyr-99) interacts with L-citrulline. The ATP site is built by Gly-129 and Thr-131. Residues Thr-131, Asn-135, and Asp-136 each coordinate L-aspartate. Asn-135 serves as a coordination point for L-citrulline. Asp-136 serves as a coordination point for ATP. The L-citrulline site is built by Arg-139 and Ser-192. Asp-194 lines the ATP pocket. The L-citrulline site is built by Thr-201, Glu-203, and Glu-280.

The protein belongs to the argininosuccinate synthase family. Type 2 subfamily. In terms of assembly, homotetramer.

It is found in the cytoplasm. It carries out the reaction L-citrulline + L-aspartate + ATP = 2-(N(omega)-L-arginino)succinate + AMP + diphosphate + H(+). Its pathway is amino-acid biosynthesis; L-arginine biosynthesis; L-arginine from L-ornithine and carbamoyl phosphate: step 2/3. This Escherichia fergusonii (strain ATCC 35469 / DSM 13698 / CCUG 18766 / IAM 14443 / JCM 21226 / LMG 7866 / NBRC 102419 / NCTC 12128 / CDC 0568-73) protein is Argininosuccinate synthase.